A 463-amino-acid chain; its full sequence is MLSLSHPHPHPAASTTAPRHQRTAPVWHRRRASHIAASAILLPGGGSTGGRGGPGDRRLPFTPPPMAPPGQLYQPFHPPPSPLPPSLRNLDLSERLQILRDRMGLWHEYAPLISSLSRDGFNPSSIQEATGISGVEQNCLVVASQVRDSLLDDRAAAFPPDLLPYFDSLGGPEVLYELRFLNARQRADAARHAIGYRLEPKGVRELARAMKGFPRWRGEEGWEAFSKDSPADCLAFARFRQSREAIDVQDRVAELERALQVVETESGRARVELELERARRKAAGEEEVDEEGEEDDAAASLRPGVTVVRLRYGEVAEATTVILLPVVRETDGVAAMESAPRRAKTDVGLGVVEVDRAWARWAVVPGWGPVAEAADDAVVVELADGRRLPWRMSDEEPVLVIANRSKKEVVEEGVYVLEREGRLVVERGKKLAEQGIAAAAAEVVIVVRPPKDEDDMVSDEEWD.

Positions 1 to 18 (MLSLSHPHPHPAASTTAP) are enriched in low complexity. Residues 1 to 31 (MLSLSHPHPHPAASTTAPRHQRTAPVWHRRR) constitute a chloroplast transit peptide. The segment at 1–84 (MLSLSHPHPH…PFHPPPSPLP (84 aa)) is disordered. A compositionally biased stretch (basic residues) spans 19–33 (RHQRTAPVWHRRRAS). Over residues 43-53 (PGGGSTGGRGG) the composition is skewed to gly residues. The segment at 83–275 (LPPSLRNLDL…SGRARVELEL (193 aa)) is N-terminal alpha-helix. The stretch at 240-294 (RQSREAIDVQDRVAELERALQVVETESGRARVELELERARRKAAGEEEVDEEGEE) forms a coiled coil. A C-terminal beta sheet region spans residues 305–450 (VTVVRLRYGE…AEVVIVVRPP (146 aa)).

The protein belongs to the RAF family. As to quaternary structure, homotrimer. Expressed in bundle sheath.

It localises to the plastid. The protein localises to the chloroplast. Its function is as follows. Required for assembly or stability of RuBisCO. Acts at a postchaperonin step to fold and/or assemble the large subunit (LS) into RuBisCO. The sequence is that of Rubisco accumulation factor 1, chloroplastic from Zea mays (Maize).